The chain runs to 75 residues: MIEQDLIKVRIIGGNDSPESSKYLEDIRTTLNGIDNNTNMINIIGLDACKNIHPNSFELDGYHGGVRALDCRILN.

This is an uncharacterized protein from Rickettsia conorii (strain ATCC VR-613 / Malish 7).